The following is a 441-amino-acid chain: Signal recognition particle 54 kDa protein (441 aa).

GTP contacts are provided by residues 103-110 (GVQGSGKT), 184-188 (DTAGR), and 244-247 (TKMD).

It belongs to the GTP-binding SRP family. SRP54 subfamily. In terms of assembly, part of the signal recognition particle protein translocation system, which is composed of SRP and FtsY. Archaeal SRP consists of a 7S RNA molecule of 300 nucleotides and two protein subunits: SRP54 and SRP19.

It localises to the cytoplasm. The catalysed reaction is GTP + H2O = GDP + phosphate + H(+). Its function is as follows. Involved in targeting and insertion of nascent membrane proteins into the cytoplasmic membrane. Binds to the hydrophobic signal sequence of the ribosome-nascent chain (RNC) as it emerges from the ribosomes. The SRP-RNC complex is then targeted to the cytoplasmic membrane where it interacts with the SRP receptor FtsY. This Aeropyrum pernix (strain ATCC 700893 / DSM 11879 / JCM 9820 / NBRC 100138 / K1) protein is Signal recognition particle 54 kDa protein.